The sequence spans 210 residues: Proteasome subunit beta 2 (210 aa).

A propeptide spans 1–12 (MSNNVEEKILHG) (removed in mature form; by autocatalysis). Residue T13 is the Nucleophile of the active site.

It belongs to the peptidase T1B family. The 20S proteasome core is composed of 14 alpha and 14 beta subunits that assemble into four stacked heptameric rings, resulting in a barrel-shaped structure. The two inner rings, each composed of seven catalytic beta subunits, are sandwiched by two outer rings, each composed of seven alpha subunits. The catalytic chamber with the active sites is on the inside of the barrel. Has a gated structure, the ends of the cylinder being occluded by the N-termini of the alpha-subunits. Is capped at one or both ends by the proteasome regulatory ATPase, PAN.

It localises to the cytoplasm. The catalysed reaction is Cleavage of peptide bonds with very broad specificity.. Its activity is regulated as follows. The formation of the proteasomal ATPase PAN-20S proteasome complex, via the docking of the C-termini of PAN into the intersubunit pockets in the alpha-rings, triggers opening of the gate for substrate entry. Interconversion between the open-gate and close-gate conformations leads to a dynamic regulation of the 20S proteasome proteolysis activity. Component of the proteasome core, a large protease complex with broad specificity involved in protein degradation. This Nitrosopumilus maritimus (strain SCM1) protein is Proteasome subunit beta 2.